The primary structure comprises 146 residues: Large ribosomal subunit protein uL15 (146 aa).

Residues 1-58 (MNLSELRPAPGARKKPTRKGQGIGSGLGKTAGKGHKGQNARSGGGVRPGFEGGQMPLQ) are disordered. Gly residues-rich tracts occupy residues 21–31 (QGIGSGLGKTA) and 42–52 (SGGGVRPGFEG).

Belongs to the universal ribosomal protein uL15 family. As to quaternary structure, part of the 50S ribosomal subunit.

Functionally, binds to the 23S rRNA. This chain is Large ribosomal subunit protein uL15, found in Desulforamulus reducens (strain ATCC BAA-1160 / DSM 100696 / MI-1) (Desulfotomaculum reducens).